We begin with the raw amino-acid sequence, 210 residues long: Chaperone protein TorD (210 aa).

The protein belongs to the TorD/DmsD family. TorD subfamily.

The protein localises to the cytoplasm. Its function is as follows. Involved in the biogenesis of TorA. Acts on TorA before the insertion of the molybdenum cofactor and, as a result, probably favors a conformation of the apoenzyme that is competent for acquiring the cofactor. The polypeptide is Chaperone protein TorD (Salmonella choleraesuis (strain SC-B67)).